We begin with the raw amino-acid sequence, 371 residues long: DNA repair and recombination protein rti1 (371 aa).

The tract at residues 346-371 is disordered; sequence IDHNRSMPIRRPSLTSNNSANTFSTK. Residues 358–371 show a composition bias toward polar residues; sequence SLTSNNSANTFSTK.

This sequence belongs to the RAD52 family. In terms of assembly, interacts with rph51 and rph54.

In terms of biological role, active in the repair of DNA damage and in mating-type switching. Probably involved in the repair of DNA double-strands breaks. Has a role in promoting S phase completion. This chain is DNA repair and recombination protein rti1 (rti1), found in Schizosaccharomyces pombe (strain 972 / ATCC 24843) (Fission yeast).